Here is a 277-residue protein sequence, read N- to C-terminus: ATP-dependent Clp protease proteolytic subunit, mitochondrial (277 aa).

Residues 1–56 (MWPGILVGGARVASCRYPALGPRLAAHFPAQRPPQRTLQNGLALQRCLHATATRAL) constitute a mitochondrion transit peptide. The active-site Nucleophile is the S153. Residue H178 is part of the active site. K200 is subject to N6-succinyllysine. N6-acetyllysine is present on K211. Positions 246–277 (VHPPQDGEDEPTLVQKEPVEAAPAAEPVPAST) are disordered. Low complexity predominate over residues 265–277 (EAAPAAEPVPAST).

Belongs to the peptidase S14 family. As to quaternary structure, fourteen CLPP subunits assemble into 2 heptameric rings which stack back to back to give a disk-like structure with a central cavity. Component of the ClpXP complex formed by the assembly of two CLPP heptameric rings with two CLPX hexameric rings, giving rise to a symmetrical structure with two central CLPP rings flanked by a CLPX ring at either end of the complex. In terms of tissue distribution, detected in liver (at protein level). Predominantly expressed in skeletal muscle. Intermediate levels in heart, liver and pancreas. Low in brain, placenta, lung and kidney.

Its subcellular location is the mitochondrion matrix. It carries out the reaction Hydrolysis of proteins to small peptides in the presence of ATP and magnesium. alpha-casein is the usual test substrate. In the absence of ATP, only oligopeptides shorter than five residues are hydrolyzed (such as succinyl-Leu-Tyr-|-NHMec, and Leu-Tyr-Leu-|-Tyr-Trp, in which cleavage of the -Tyr-|-Leu- and -Tyr-|-Trp bonds also occurs).. In terms of biological role, protease component of the ClpXP complex that cleaves peptides and various proteins in an ATP-dependent process. Has low peptidase activity in the absence of CLPX. The ClpXP complex can degrade CSN1S1, CSN2 and CSN3, as well as synthetic peptides (in vitro) and may be responsible for a fairly general and central housekeeping function rather than for the degradation of specific substrates. Cleaves PINK1 in the mitochondrion. This Homo sapiens (Human) protein is ATP-dependent Clp protease proteolytic subunit, mitochondrial.